Here is a 446-residue protein sequence, read N- to C-terminus: Probable cytosolic iron-sulfur protein assembly protein 1 (446 aa).

WD repeat units follow at residues 17–59, 63–106, 143–182, 192–241, 247–291, 330–368, and 398–446; these read AFKP…AHSN, GHTR…PLEE, GHEN…EGDD, EHDG…EWAC, GHSS…PEAS, VHTR…NPST, and GHGP…SIEL. Residues 106 to 128 show a composition bias toward basic and acidic residues; the sequence is EGTKKGESTEIDVTRRRNNNDSD. Residues 106–133 form a disordered region; it reads EGTKKGESTEIDVTRRRNNNDSDKDNDD.

Belongs to the WD repeat CIA1 family.

Its function is as follows. Essential component of the cytosolic iron-sulfur (Fe/S) protein assembly machinery. Required for the maturation of extramitochondrial Fe/S proteins. This chain is Probable cytosolic iron-sulfur protein assembly protein 1, found in Pyricularia oryzae (strain 70-15 / ATCC MYA-4617 / FGSC 8958) (Rice blast fungus).